Here is a 205-residue protein sequence, read N- to C-terminus: Isochorismatase domain-containing protein 2 (205 aa).

This sequence belongs to the isochorismatase family.

The sequence is that of Isochorismatase domain-containing protein 2 (isoc2) from Xenopus laevis (African clawed frog).